The sequence spans 144 residues: Large ribosomal subunit protein uL16c (144 aa).

It belongs to the universal ribosomal protein uL16 family. Part of the 50S ribosomal subunit.

Its subcellular location is the plastid. It is found in the chloroplast. The protein is Large ribosomal subunit protein uL16c of Chara vulgaris (Common stonewort).